Consider the following 486-residue polypeptide: Probable glycine dehydrogenase (decarboxylating) subunit 2 (486 aa).

Lys269 is subject to N6-(pyridoxal phosphate)lysine.

This sequence belongs to the GcvP family. C-terminal subunit subfamily. As to quaternary structure, the glycine cleavage system is composed of four proteins: P, T, L and H. In this organism, the P 'protein' is a heterodimer of two subunits. Requires pyridoxal 5'-phosphate as cofactor.

The catalysed reaction is N(6)-[(R)-lipoyl]-L-lysyl-[glycine-cleavage complex H protein] + glycine + H(+) = N(6)-[(R)-S(8)-aminomethyldihydrolipoyl]-L-lysyl-[glycine-cleavage complex H protein] + CO2. In terms of biological role, the glycine cleavage system catalyzes the degradation of glycine. The P protein binds the alpha-amino group of glycine through its pyridoxal phosphate cofactor; CO(2) is released and the remaining methylamine moiety is then transferred to the lipoamide cofactor of the H protein. This is Probable glycine dehydrogenase (decarboxylating) subunit 2 from Chlorobium phaeobacteroides (strain DSM 266 / SMG 266 / 2430).